A 171-amino-acid chain; its full sequence is Mitochondrial import inner membrane translocase subunit Tim17-A (171 aa).

A disulfide bridge links cysteine 9 with cysteine 78. 3 helical membrane-spanning segments follow: residues 17-37 (CGGAFTMGTIGGGIFQAFKGF), 63-77 (GGSFAVWGGLFSTID), and 113-133 (VGSAAMGGILLALIEGAGILL). Positions 147–171 (FAEDHSQLPSSQLPSSPFGDYRQYQ) are disordered. Residues 153-163 (QLPSSQLPSSP) show a composition bias toward low complexity.

Belongs to the Tim17/Tim22/Tim23 family. As to quaternary structure, component of the TIM23 complex at least composed of TIMM23, TIMM17 (TIMM17A or TIMM17B) and TIMM50. The complex interacts with the TIMM44 component of the PAM complex and with DNAJC15. In terms of processing, degraded by YMEL1 downstream of the integrated stress response (ISR).

The protein resides in the mitochondrion inner membrane. In terms of biological role, essential component of the TIM23 complex, a complex that mediates the translocation of transit peptide-containing proteins across the mitochondrial inner membrane. In Rattus norvegicus (Rat), this protein is Mitochondrial import inner membrane translocase subunit Tim17-A (Timm17a).